Reading from the N-terminus, the 290-residue chain is Probable adenylate kinase 2, chloroplastic (290 aa).

Residues 1-10 (MASSMAATAT) are compositionally biased toward low complexity. Positions 1–37 (MASSMAATATLSPPVLSAERPTVRGGLFLPPSPATSR) are disordered. A chloroplast-targeting transit peptide spans 1 to 61 (MASSMAATAT…ATRKPRSLPR (61 aa)). 83–88 (ASGKGT) contributes to the ATP binding site. The tract at residues 103 to 132 (SAGDLLRAEIAAGSENGKRAKEFMEKGQLV) is NMP. Residues Arg-109, 130–132 (QLV), 159–162 (GYPR), and Gln-166 each bind AMP. ATP is bound by residues Arg-193, Arg-197, and 206 to 207 (IY). Positions 196–229 (GRRLDPVTGKIYHLKYSPPENEEIASRLTQRFDD) are LID. AMP is bound by residues Arg-226 and Arg-237.

Belongs to the adenylate kinase family.

Its subcellular location is the plastid. The protein resides in the chloroplast. It carries out the reaction AMP + ATP = 2 ADP. In terms of biological role, catalyzes the reversible transfer of the terminal phosphate group between ATP and AMP. Plays an important role in cellular energy homeostasis and in adenine nucleotide metabolism. In Oryza sativa subsp. japonica (Rice), this protein is Probable adenylate kinase 2, chloroplastic.